The sequence spans 331 residues: Putative heme-binding peroxidase (331 aa).

The active-site Proton acceptor is the H50. Residue H174 coordinates heme b. W190 acts as the Tryptophan radical intermediate in catalysis. Residues 288–331 form a disordered region; that stretch reads INTDNQKGGYRSAPKKSDSTPATSGQPGASKTGGCPVMHHKAKL. The span at 306-316 shows a compositional bias: polar residues; the sequence is STPATSGQPGA.

It belongs to the peroxidase family. Cytochrome c peroxidase subfamily. Heme b serves as cofactor.

Functionally, destroys radicals which are normally produced within the cells and which are toxic to biological systems. This Gibberella zeae (strain ATCC MYA-4620 / CBS 123657 / FGSC 9075 / NRRL 31084 / PH-1) (Wheat head blight fungus) protein is Putative heme-binding peroxidase.